Reading from the N-terminus, the 219-residue chain is Adenylate kinase (219 aa).

13-18 (GAGKGT) is a binding site for ATP. The NMP stretch occupies residues 33 to 62 (STGDIFRAAIKNETKMGLEAKKYIDAGNLV). Residues Thr34, Arg39, 60–62 (NLV), 88–91 (GYPR), and Gln95 contribute to the AMP site. The LID stretch occupies residues 129–167 (GRFICRTCGATYHKLYNKPKVEGTCDVCGGHDFYQRDDD). Arg130 contributes to the ATP binding site. Residues Cys133 and Cys136 each contribute to the Zn(2+) site. Residue 139-140 (TY) coordinates ATP. Residues Cys153 and Cys156 each contribute to the Zn(2+) site. AMP-binding residues include Arg164 and Arg175. Position 203 (Arg203) interacts with ATP.

It belongs to the adenylate kinase family. Monomer.

It is found in the cytoplasm. The catalysed reaction is AMP + ATP = 2 ADP. Its pathway is purine metabolism; AMP biosynthesis via salvage pathway; AMP from ADP: step 1/1. Functionally, catalyzes the reversible transfer of the terminal phosphate group between ATP and AMP. Plays an important role in cellular energy homeostasis and in adenine nucleotide metabolism. This is Adenylate kinase from Lactiplantibacillus plantarum (strain ATCC BAA-793 / NCIMB 8826 / WCFS1) (Lactobacillus plantarum).